The following is a 351-amino-acid chain: Nicotinate-nucleotide--dimethylbenzimidazole phosphoribosyltransferase (351 aa).

The Proton acceptor role is filled by Glu-318.

This sequence belongs to the CobT family.

The catalysed reaction is 5,6-dimethylbenzimidazole + nicotinate beta-D-ribonucleotide = alpha-ribazole 5'-phosphate + nicotinate + H(+). It participates in nucleoside biosynthesis; alpha-ribazole biosynthesis; alpha-ribazole from 5,6-dimethylbenzimidazole: step 1/2. In terms of biological role, catalyzes the synthesis of alpha-ribazole-5'-phosphate from nicotinate mononucleotide (NAMN) and 5,6-dimethylbenzimidazole (DMB). This is Nicotinate-nucleotide--dimethylbenzimidazole phosphoribosyltransferase from Shewanella frigidimarina (strain NCIMB 400).